The sequence spans 229 residues: Ras-related protein Rab-33B (229 aa).

GTP is bound by residues N43, V44, G45, K46, T47, C48, T62, and T65. T47 contributes to the Mg(2+) binding site. The Switch 1 signature appears at 56–68; it reads GRFPDRTEATIGV. Positions 65 and 88 each coordinate Mg(2+). Residues 89–108 carry the Switch 2 motif; sequence TAGQERFRKSMVQHYYRNVH. Positions 91, 148, 149, 151, 179, and 180 each coordinate GTP. 2 S-geranylgeranyl cysteine lipidation sites follow: C227 and C229. At C229 the chain carries Cysteine methyl ester.

This sequence belongs to the small GTPase superfamily. Rab family. As to quaternary structure, interacts (GTP- and GDP-bound forms) with ATG16L1; the complex consists of a tetramer where two RAB33B molecules bind independently one molecule of the ATG16L1 homodimer; the interaction promotes ATG12-ATG5-ATG16L1 complex recruitment to phagophores. Interacts with ATG16L2; however interaction is approximately hundred times lower than for ATG16L1. Interacts with RIC1 (via C-terminus domain); the interaction is direct with a preference for RAB33B-GTP. Interacts with RGP1. Mg(2+) serves as cofactor. Post-translationally, prenylated. Ubiquitous.

The protein resides in the golgi apparatus membrane. Its subcellular location is the golgi apparatus. The protein localises to the cis-Golgi network. It localises to the preautophagosomal structure membrane. It carries out the reaction GTP + H2O = GDP + phosphate + H(+). Its activity is regulated as follows. Regulated by guanine nucleotide exchange factors (GEFs) which promote the exchange of bound GDP for free GTP. Regulated by GTPase activating proteins (GAPs) such as SGSM2 which increase the GTP hydrolysis activity. Inhibited by GDP dissociation inhibitors (GDIs). Its function is as follows. The small GTPases Rab are key regulators of intracellular membrane trafficking, from the formation of transport vesicles to their fusion with membranes. Rabs cycle between an inactive GDP-bound form and an active GTP-bound form that is able to recruit to membranes different sets of downstream effectors directly responsible for vesicle formation, movement, tethering and fusion. RAB33B acts, in coordination with RAB6A, to regulate intra-Golgi retrograde trafficking. Participates in autophagosome formation by recruiting the ATG12-ATG5-ATG16L1 complex to phagophores, probably in a nucleotide-independent manner. The chain is Ras-related protein Rab-33B from Mus musculus (Mouse).